Reading from the N-terminus, the 80-residue chain is Sec-independent protein translocase protein TatA (80 aa).

The chain crosses the membrane as a helical span at residues 1–21 (MGISMWQLLIVLLIIVLLFGT). The interval 39–80 (KKAMSDGESEEDKEPKKLSQNESRTIEGSVERNDAKTESKHS) is disordered. Residues 67 to 80 (SVERNDAKTESKHS) are compositionally biased toward basic and acidic residues.

It belongs to the TatA/E family. The Tat system comprises two distinct complexes: a TatABC complex, containing multiple copies of TatA, TatB and TatC subunits, and a separate TatA complex, containing only TatA subunits. Substrates initially bind to the TatABC complex, which probably triggers association of the separate TatA complex to form the active translocon.

It localises to the cell inner membrane. Functionally, part of the twin-arginine translocation (Tat) system that transports large folded proteins containing a characteristic twin-arginine motif in their signal peptide across membranes. TatA could form the protein-conducting channel of the Tat system. This chain is Sec-independent protein translocase protein TatA, found in Hahella chejuensis (strain KCTC 2396).